Here is a 1014-residue protein sequence, read N- to C-terminus: 2-oxoglutarate dehydrogenase, mitochondrial (1014 aa).

A mitochondrion-targeting transit peptide spans 1–30 (MLRFVSSQTCRYSSRGLLKTSLLKNASTVK). 4 residues coordinate thiamine diphosphate: Arg306, Asp406, Asn439, and Ile441. Asp406, Asn439, and Ile441 together coordinate Mg(2+).

The protein belongs to the alpha-ketoglutarate dehydrogenase family. As to quaternary structure, component of the 2-oxoglutarate dehydrogenase complex (OGDC), also called alpha-ketoglutarate dehydrogenase (KGDH) complex. The copmplex is composed of the catalytic subunits OGDH (2-oxoglutarate dehydrogenase KGD1; also called E1 subunit), DLST (dihydrolipoamide succinyltransferase KGD2; also called E2 subunit) and DLD (dihydrolipoamide dehydrogenase LPD1; also called E3 subunit), and the assembly factor KGD4. It depends on thiamine diphosphate as a cofactor. The cofactor is Mg(2+).

It is found in the mitochondrion. Its subcellular location is the mitochondrion matrix. The protein localises to the mitochondrion nucleoid. The catalysed reaction is N(6)-[(R)-lipoyl]-L-lysyl-[protein] + 2-oxoglutarate + H(+) = N(6)-[(R)-S(8)-succinyldihydrolipoyl]-L-lysyl-[protein] + CO2. With respect to regulation, catabolite repressed. The 2-oxoglutarate dehydrogenase complex catalyzes the overall conversion of 2-oxoglutarate to succinyl-CoA and CO(2). It contains multiple copies of three enzymatic components: 2-oxoglutarate dehydrogenase (E1), dihydrolipoamide succinyltransferase (E2) and lipoamide dehydrogenase (E3). The sequence is that of 2-oxoglutarate dehydrogenase, mitochondrial (KGD1) from Saccharomyces cerevisiae (strain ATCC 204508 / S288c) (Baker's yeast).